The following is a 251-amino-acid chain: Triosephosphate isomerase (251 aa).

9-11 (NWK) is a substrate binding site. The Electrophile role is filled by histidine 96. Glutamate 168 (proton acceptor) is an active-site residue. Substrate contacts are provided by residues glycine 174, serine 214, and 235 to 236 (GG).

Belongs to the triosephosphate isomerase family. In terms of assembly, homodimer.

It localises to the cytoplasm. The catalysed reaction is D-glyceraldehyde 3-phosphate = dihydroxyacetone phosphate. The protein operates within carbohydrate biosynthesis; gluconeogenesis. It functions in the pathway carbohydrate degradation; glycolysis; D-glyceraldehyde 3-phosphate from glycerone phosphate: step 1/1. Functionally, involved in the gluconeogenesis. Catalyzes stereospecifically the conversion of dihydroxyacetone phosphate (DHAP) to D-glyceraldehyde-3-phosphate (G3P). The polypeptide is Triosephosphate isomerase (Porphyromonas gingivalis (strain ATCC BAA-308 / W83)).